The chain runs to 173 residues: Lipoprotein signal peptidase (173 aa).

Transmembrane regions (helical) follow at residues 14 to 34 (LAWL…KYYF), 44 to 64 (IIVI…AAFS), 72 to 92 (WQRW…VVWL), and 98 to 118 (DDTW…GNLY). Catalysis depends on residues D128 and D147. A helical transmembrane segment spans residues 139–159 (YFPAFNVADSAITVGAIMLAL).

The protein belongs to the peptidase A8 family.

Its subcellular location is the cell inner membrane. The enzyme catalyses Release of signal peptides from bacterial membrane prolipoproteins. Hydrolyzes -Xaa-Yaa-Zaa-|-(S,diacylglyceryl)Cys-, in which Xaa is hydrophobic (preferably Leu), and Yaa (Ala or Ser) and Zaa (Gly or Ala) have small, neutral side chains.. It functions in the pathway protein modification; lipoprotein biosynthesis (signal peptide cleavage). Its function is as follows. This protein specifically catalyzes the removal of signal peptides from prolipoproteins. This is Lipoprotein signal peptidase from Pseudomonas syringae pv. tomato (strain ATCC BAA-871 / DC3000).